A 142-amino-acid polypeptide reads, in one-letter code: Large ribosomal subunit protein uL13 (142 aa).

The protein belongs to the universal ribosomal protein uL13 family. In terms of assembly, part of the 50S ribosomal subunit.

In terms of biological role, this protein is one of the early assembly proteins of the 50S ribosomal subunit, although it is not seen to bind rRNA by itself. It is important during the early stages of 50S assembly. This Ralstonia nicotianae (strain ATCC BAA-1114 / GMI1000) (Ralstonia solanacearum) protein is Large ribosomal subunit protein uL13.